The following is a 37-amino-acid chain: Large ribosomal subunit protein bL36 (37 aa).

Belongs to the bacterial ribosomal protein bL36 family.

In Bordetella bronchiseptica (strain ATCC BAA-588 / NCTC 13252 / RB50) (Alcaligenes bronchisepticus), this protein is Large ribosomal subunit protein bL36.